Reading from the N-terminus, the 84-residue chain is Small ribosomal subunit protein uS17 (84 aa).

The protein belongs to the universal ribosomal protein uS17 family. In terms of assembly, part of the 30S ribosomal subunit.

Its function is as follows. One of the primary rRNA binding proteins, it binds specifically to the 5'-end of 16S ribosomal RNA. The sequence is that of Small ribosomal subunit protein uS17 from Legionella pneumophila (strain Paris).